A 333-amino-acid chain; its full sequence is T-cell surface glycoprotein CD1b-2 (333 aa).

Residues 1 to 20 (MLLLPLLLLGVILPGGDNED) form the signal peptide. Topologically, residues 21–302 (VFQGPTSFHL…LYWGHPTSIG (282 aa)) are extracellular. 3 N-linked (GlcNAc...) asparagine glycosylation sites follow: Asn38, Asn75, and Asn146. 3 disulfides stabilise this stretch: Cys120–Cys184, Cys149–Cys163, and Cys224–Cys279. Residues 185-295 (PRYLLGVLDA…LGDQDIILYW (111 aa)) form the Ig-like domain. The helical transmembrane segment at 303 to 323 (LILVAIIVPSLILSICLALWF) threads the bilayer. Over 324-333 (WRRWSYQNIL) the chain is Cytoplasmic. An Internalization signal motif is present at residues 329–332 (YQNI).

In terms of assembly, heterodimer with B2M (beta-2-microglobulin). Interacts with saposin C.

It localises to the cell membrane. The protein resides in the endosome membrane. The protein localises to the lysosome membrane. Antigen-presenting protein that binds self and non-self lipid and glycolipid antigens and presents them to T-cell receptors on natural killer T-cells. The protein is T-cell surface glycoprotein CD1b-2 of Ovis aries (Sheep).